Reading from the N-terminus, the 720-residue chain is DNA replication licensing factor mcm7 (720 aa).

Residues 183–210 (CDQCGAETYQPIQSPTFMPLIMCPSREC) form a C4-type zinc finger. Positions 331–537 (FYEKLAASIA…NDLRLAQHIT (207 aa)) constitute an MCM domain. Positions 344, 383, 385, 386, 387, 488, 513, and 603 each coordinate ATP. The Arginine finger signature appears at 512-515 (SRFD).

It belongs to the MCM family. As to quaternary structure, component of the mcm2-7 complex (RLF-M). The complex forms a toroidal hexameric ring with the proposed subunit order mcm2-mcm6-mcm4-mcm7-mcm3-mcm5. The heterodimer of mmcm3/mcm5 interacts with mcm4, mmcm6, mcm7 and weakly with mcm2. The N-terminus is required for interaction with mmcm3, though this interaction may not be direct, and remains in a complex with mmcm3 throughout the cell cycle. Begins to associate with zmcm6 at the neurula stage. Component of the replisome complex. Component of the CMG helicase complex, composed of the mcm2-7 complex, the GINS complex and cdc45. Ubiquitinated by traip when forks converge following formation of DNA interstrand cross-links. Short ubiquitin chains on mcm7 promote recruitment of DNA glycosylase neil3. If the interstrand cross-link cannot be cleaved by neil3, the ubiquitin chains continue to grow on mcm7, promoting the unloading of the CMG helicase complex by the vcp/p97 ATPase.

The protein resides in the nucleus. It localises to the chromosome. The catalysed reaction is ATP + H2O = ADP + phosphate + H(+). Its function is as follows. Acts as a component of the mcm2-7 complex (mcm complex) which is the putative replicative helicase essential for 'once per cell cycle' DNA replication initiation and elongation in eukaryotic cells. The active ATPase sites in the mcm2-7 ring are formed through the interaction surfaces of two neighboring subunits such that a critical structure of a conserved arginine finger motif is provided in trans relative to the ATP-binding site of the Walker A box of the adjacent subunit. The six ATPase active sites, however, are likely to contribute differentially to the complex helicase activity. The existence of maternal and zygotic forms of mcm3 and mcm6 suggests that specific forms of mcm2-7 complexes may be used during different stages of development. This chain is DNA replication licensing factor mcm7, found in Xenopus tropicalis (Western clawed frog).